The primary structure comprises 558 residues: TNF receptor-associated factor 5 (558 aa).

An RING-type zinc finger spans residues 45–85 (CAFCHSVLHNPHQTGCGHRFCQQCIRSLRELNSVPICPVDK). 2 consecutive TRAF-type zinc fingers follow at residues 127–181 (DHLQ…TNLQ) and 182–239 (DHEE…GNLL). The stretch at 252–302 (LVLEKNYQLEQRISDLYQSLEQKESKIQQLAETVKKFEKELKQFTQMFGRN) forms a coiled coil. Lysine 318 is covalently cross-linked (Glycyl lysine isopeptide (Lys-Gly) (interchain with G-Cter in ubiquitin)). Residues 340–400 (LDLRSLVDAV…EERFKQLEGA (61 aa)) are a coiled coil. Positions 345–558 (LVDAVDSVKQ…AVDLTDLEDL (214 aa)) are interaction with EIF2AK2/PKR. Residues 403–550 (SGKLIWKVTD…DDTLFLKVAV (148 aa)) enclose the MATH domain.

The protein belongs to the TNF receptor-associated factor family. A subfamily. Homotrimer. Heterotrimer with TRAF3. Associates with TNFRSF5/CD40 through interaction with TRAF3. Associates with LTBR/TNFRSF3, TNFRSF4, TNFRSF8/CD30, TNFRSF11A/RANK, TNFRSF13B/TACI, TNFRSF14, TNFRSF17, TNFRSF19/TROY, RIPK2, MAP3K14, MAP3K5, and TRAF and TNF receptor associated protein TDP2. Interacts (via C-terminus) with EIF2AK2/PKR (via the kinase catalytic domain). Ubiquitinated at Lys-318 by the SCF(FBXL2) complex, leading to its degradation by the proteasome.

The protein resides in the cytoplasm. It localises to the cytosol. Functionally, adapter protein and signal transducer that links members of the tumor necrosis factor receptor family to different signaling pathways by association with the receptor cytoplasmic domain and kinases. Mediates activation of NF-kappa-B and probably JNK. Seems to be involved in apoptosis. Plays a role in mediating activation of NF-kappa-B by EIF2AK2/PKR. The protein is TNF receptor-associated factor 5 (Traf5) of Mus musculus (Mouse).